The sequence spans 194 residues: Phosphoheptose isomerase (194 aa).

The SIS domain maps to 37-194 (IADTFKAGGK…LIEKEMVAQG (158 aa)). A substrate-binding site is contributed by 52–54 (NGG). The Zn(2+) site is built by H61 and E65. Substrate-binding positions include E65, 93-94 (ND), 119-121 (STS), S124, and Q172. The Zn(2+) site is built by Q172 and H180.

This sequence belongs to the SIS family. GmhA subfamily. Homotetramer. It depends on Zn(2+) as a cofactor.

It localises to the cytoplasm. The catalysed reaction is 2 D-sedoheptulose 7-phosphate = D-glycero-alpha-D-manno-heptose 7-phosphate + D-glycero-beta-D-manno-heptose 7-phosphate. It participates in carbohydrate biosynthesis; D-glycero-D-manno-heptose 7-phosphate biosynthesis; D-glycero-alpha-D-manno-heptose 7-phosphate and D-glycero-beta-D-manno-heptose 7-phosphate from sedoheptulose 7-phosphate: step 1/1. Functionally, catalyzes the isomerization of sedoheptulose 7-phosphate in D-glycero-D-manno-heptose 7-phosphate. The sequence is that of Phosphoheptose isomerase from Sodalis glossinidius (strain morsitans).